The sequence spans 65 residues: Sperm protamine P1 (65 aa).

A disordered region spans residues 1 to 65 (MARYRHSRSR…RYSRRRRRRY (65 aa)).

Belongs to the protamine P1 family. In terms of tissue distribution, testis.

It localises to the nucleus. The protein localises to the chromosome. Functionally, protamines substitute for histones in the chromatin of sperm during the haploid phase of spermatogenesis. They compact sperm DNA into a highly condensed, stable and inactive complex. The polypeptide is Sperm protamine P1 (PRM1) (Lagorchestes hirsutus (Rufous hare-wallaby)).